The following is a 512-amino-acid chain: Metal transporter Nramp4 (512 aa).

The next 12 helical transmembrane spans lie at 52 to 72, 80 to 100, 129 to 149, 161 to 181, 189 to 209, 235 to 255, 277 to 297, 323 to 343, 371 to 391, 402 to 422, 440 to 460, and 468 to 488; these read LWLF…PGNL, AIAG…GLLI, MVLW…EVIG, LVPL…FLFL, LEAV…WMFG, AVGI…SALV, IEST…TTVF, YGGG…AAGQ, ALIT…VFDS, WLNV…LCLV, ISWI…VDFF, and ILLV…LYLI.

This sequence belongs to the NRAMP (TC 2.A.55) family. As to expression, expressed in vascular tissues.

It localises to the vacuole membrane. In terms of biological role, vacuolar metal transporter involved in intracellular metal homeostasis. Can transport iron (Fe), manganese (Mn) and cadmium (Cd). Regulates metal accumulation under Fe starvation. Acts redundantly with NRAMP3 to mobilize vacuolar Fe and provide sufficient Fe during seed germination. In association with NRAMP3, required for optimal growth and photosynthesis under Mn deficiency. Exports Mn from vacuoles in leaf mesophyll cells, making Mn available for functional photosystem II in chloroplasts. In Arabidopsis thaliana (Mouse-ear cress), this protein is Metal transporter Nramp4 (NRAMP4).